The following is a 1989-amino-acid chain: Zinc finger C3H1 domain-containing protein (1989 aa).

4 disordered regions span residues 1–133 (MATA…RPSF), 148–218 (GRPY…SKNE), 251–290 (SSKEENVQEDPKTLNFEDQTSTDNVSITKDSSKEVAPEEK), and 310–365 (LPGD…LGED). Position 2 is an N-acetylalanine (Ala-2). A phosphoserine mark is found at Ser-15, Ser-28, and Ser-34. Positions 20-32 (GELEDGEISDDDN) are enriched in acidic residues. Positions 33-44 (NSQIRSRSSSSS) are enriched in low complexity. The span at 62-72 (RGGGSGGGGGS) shows a compositional bias: gly residues. Composition is skewed to low complexity over residues 114–132 (PPSVRMPSSSLSESSPRPS), 183–192 (GFSSSQSWRE), and 201–210 (KSFGRSPSRK). A Phosphoserine modification is found at Ser-128. A coiled-coil region spans residues 219 to 259 (NCVEETFEDLLLKYKQIQLELECINKDEKLALSSKEENVQE). Ser-251 is subject to Phosphoserine. Residues 251–262 (SSKEENVQEDPK) are compositionally biased toward basic and acidic residues. The span at 266 to 279 (FEDQTSTDNVSITK) shows a compositional bias: polar residues. Over residues 280–290 (DSSKEVAPEEK) the composition is skewed to basic and acidic residues. Over residues 330–340 (KSDTTDSSQGL) the composition is skewed to polar residues. Phosphoserine is present on residues Ser-352 and Ser-383. The stretch at 358–389 (SEKKLGEDEEELSELQLRLLALQSASKKWQQK) forms a coiled coil. Disordered stretches follow at residues 385–671 (KWQQ…SNLS) and 711–770 (LNDS…PEAL). Residues 392 to 402 (QVMKESKEKLT) show a composition bias toward basic and acidic residues. Residues 430 to 440 (ALRKQQTKAWK) show a composition bias toward basic residues. Residues 432-487 (RKQQTKAWKKLQQQKEQERQKEEDQRKQAEEEERRKREEEIRKIRDLSNQEEQYNR) are a coiled coil. Basic and acidic residues-rich tracts occupy residues 444–479 (QQKEQERQKEEDQRKQAEEEERRKREEEIRKIRDLS) and 501–515 (KSSDPDLRRSLDKQP). Residues 527-537 (NYEEVAMDTDS) are compositionally biased toward acidic residues. Positions 574-583 (VSSLPPLSQP) are enriched in low complexity. A compositionally biased stretch (pro residues) spans 594–616 (PLPPLPPLPPLPPEDPEQPPKPP). Positions 647 to 671 (TSSNSDPPSPPVLNNSHPVPRSNLS) are enriched in polar residues. 4 positions are modified to phosphoserine: Ser-662, Ser-714, Ser-717, and Ser-719. A compositionally biased stretch (basic and acidic residues) spans 755 to 770 (PKSEKENDPLRTPEAL). At Thr-766 the chain carries Phosphothreonine. Phosphoserine is present on residues Ser-805 and Ser-809. Residues 847 to 909 (LKNLVQQEAK…QQRVTIKKAL (63 aa)) adopt a coiled-coil conformation. A phosphoserine mark is found at Ser-948, Ser-949, and Ser-953. Residues 965–989 (EKRRLQKLEYEYALKIQKLKEARAL) are a coiled coil. Residues Ser-998 and Ser-1046 each carry the phosphoserine modification. The C3H1-type zinc-finger motif lies at 1185 to 1206 (FCRFDLTGTCNDDDCQWQHIQD). A phosphoserine mark is found at Ser-1301, Ser-1303, and Ser-1304. TPR repeat units lie at residues 1361 to 1400 (VQLWLKLAYKYLNQNEGECSESLDSALNVLARALENNKDN), 1401 to 1434 (PEIWCHYLRLFSKRGTKDEVQEMCETAVEYAPDY), 1438 to 1471 (WTFLHLESTFEEKDYVCERMLEFLMGAAKQETSN), 1478 to 1511 (LEALLFRVQLHIFTGRCQSALAILQNALKSANDG), 1602 to 1635 (LPLYTNMIALHQLLERYEAAMELCKSLLESCPIN), 1636 to 1669 (CQLLEALVALYLQTNQHDKARAVWLTAFEKNPQN), and 1745 to 1778 (PYLWLIYCLCHPLQSSIKETVEAYEAALGVAMRC).

In terms of assembly, component of the poly(A) tail exosome targeting (PAXT) complex made of accessory factors, such as PABPN1, ZFC3H1 and MTREX, and which directs a subset of long and polyadenylated poly(A) RNAs for exosomal degradation. Co-localizes with component of the CBC-ARS2 (CBCA) complex. Binds to RNA exosome components. Interacts with NCBP1/CBP80, ZC3H18, MTREX and PABPN1 in a RNase-insensitive manner, and with PABPC4, PABPC1 and ZC3H14 in a RNase-sensitive manner.

It is found in the nucleus. Functionally, subunit of the trimeric poly(A) tail exosome targeting (PAXT) complex, a complex that directs a subset of long and polyadenylated poly(A) RNAs for exosomal degradation. The RNA exosome is fundamental for the degradation of RNA in eukaryotic nuclei. Substrate targeting is facilitated by its cofactor MTREX, which links to RNA-binding protein adapters. The sequence is that of Zinc finger C3H1 domain-containing protein (ZFC3H1) from Homo sapiens (Human).